The primary structure comprises 286 residues: Tryptophan 2,3-dioxygenase (286 aa).

Substrate is bound by residues 55-59 (FIIIH), Y117, and R121. H244 is a heme binding site. T258 lines the substrate pocket.

Belongs to the tryptophan 2,3-dioxygenase family. As to quaternary structure, homotetramer. Heme serves as cofactor.

The catalysed reaction is L-tryptophan + O2 = N-formyl-L-kynurenine. It functions in the pathway amino-acid degradation; L-tryptophan degradation via kynurenine pathway; L-kynurenine from L-tryptophan: step 1/2. Its function is as follows. Heme-dependent dioxygenase that catalyzes the oxidative cleavage of the L-tryptophan (L-Trp) pyrrole ring and converts L-tryptophan to N-formyl-L-kynurenine. Catalyzes the oxidative cleavage of the indole moiety. The protein is Tryptophan 2,3-dioxygenase of Shewanella woodyi (strain ATCC 51908 / MS32).